A 122-amino-acid chain; its full sequence is MIQQESRLRVADNTGAKEILCIRVLGGSGRRYAGIGDVIVATVKDAIPGGNVKKGDVVKAVIVRTVKERRRPDGSYIRFDENAAVILKNDGDPRGTRIFGPVGRELREKKFMKIISLAPEVL.

It belongs to the universal ribosomal protein uL14 family. Part of the 50S ribosomal subunit. Forms a cluster with proteins L3 and L19. In the 70S ribosome, L14 and L19 interact and together make contacts with the 16S rRNA in bridges B5 and B8.

Functionally, binds to 23S rRNA. Forms part of two intersubunit bridges in the 70S ribosome. This is Large ribosomal subunit protein uL14 from Streptomyces avermitilis (strain ATCC 31267 / DSM 46492 / JCM 5070 / NBRC 14893 / NCIMB 12804 / NRRL 8165 / MA-4680).